The chain runs to 427 residues: MDVLEVAARATGTGPVCDACLGRLVADRSFGLSNAERGSALRTSLALRDDEDYEPVETADCWVCEGRCTEFDEWAERAAEAVEDVEFATYNVGTRPPPLIEENEALLREEAGLDDDAGEPFKSEFNREVGKRFGRLTETEVSFDRPDVQFTIDLAEDEIDAKVNSTFVYGRYRKLERDIPQTEWPCRECKGSGRQGADPCDHCGGSGYLYDDSVEEYTAPVVEDVMDGTEATFHGAGREDVDALMLGTGRPFVIEVEEPRRRRVDTDRLQADINAFADGAVEVEGLRLATYDMVERVKEHDAAKRYRAEVAFDADVDADALAAAVEELEGTTVEQYTPNRVDHRRASITRERDVYEATAELDDARHAIVEIHGEGGLYIKELISGDEGRTEPSLAGLLGVGAEVTALDVVAVEGEDEPFEREEFFRE.

Aspartate 240 acts as the Nucleophile in catalysis. The substrate site is built by tyrosine 306 and tyrosine 378.

It belongs to the pseudouridine synthase Pus10 family.

It catalyses the reaction uridine(54) in tRNA = pseudouridine(54) in tRNA. The enzyme catalyses uridine(55) in tRNA = pseudouridine(55) in tRNA. Responsible for synthesis of pseudouridine from uracil-54 and uracil-55 in the psi GC loop of transfer RNAs. The sequence is that of tRNA pseudouridine synthase Pus10 from Halorubrum lacusprofundi (strain ATCC 49239 / DSM 5036 / JCM 8891 / ACAM 34).